Consider the following 352-residue polypeptide: Alanine racemase (352 aa).

The Proton acceptor; specific for D-alanine role is filled by Lys33. Lys33 bears the N6-(pyridoxal phosphate)lysine mark. Arg129 is a substrate binding site. The active-site Proton acceptor; specific for L-alanine is the Tyr250. Position 298 (Met298) interacts with substrate.

This sequence belongs to the alanine racemase family. Pyridoxal 5'-phosphate is required as a cofactor.

The enzyme catalyses L-alanine = D-alanine. It functions in the pathway amino-acid biosynthesis; D-alanine biosynthesis; D-alanine from L-alanine: step 1/1. In terms of biological role, catalyzes the interconversion of L-alanine and D-alanine. May also act on other amino acids. The sequence is that of Alanine racemase (alr) from Neisseria gonorrhoeae (strain ATCC 700825 / FA 1090).